The sequence spans 216 residues: NADH-quinone oxidoreductase subunit C (216 aa).

The protein belongs to the complex I 30 kDa subunit family. NDH-1 is composed of 14 different subunits. Subunits NuoB, C, D, E, F, and G constitute the peripheral sector of the complex.

The protein resides in the cell inner membrane. The enzyme catalyses a quinone + NADH + 5 H(+)(in) = a quinol + NAD(+) + 4 H(+)(out). NDH-1 shuttles electrons from NADH, via FMN and iron-sulfur (Fe-S) centers, to quinones in the respiratory chain. The immediate electron acceptor for the enzyme in this species is believed to be ubiquinone. Couples the redox reaction to proton translocation (for every two electrons transferred, four hydrogen ions are translocated across the cytoplasmic membrane), and thus conserves the redox energy in a proton gradient. This is NADH-quinone oxidoreductase subunit C from Francisella tularensis subsp. holarctica (strain OSU18).